Here is a 905-residue protein sequence, read N- to C-terminus: MLRDPTTTGWPPLLLLLLQLPPPPLVCGAPAGPGTGAQASELVVPTRLPGSASELAFHLSAFGQGFVLRLAPDASFLAPEFKIERLGGSSAAAGGEPGLRGCFFSGTVNGERESLAAMSCVAGWSGSFLLAGEEFTIQPQGAGDSLDQPHRLQRWGPGQRREDPGLAAAEVFPLPQGLEWEVEMGNGQGQERSDNEEDRKQDKEGLLKETEDSRKVPPPFGSKTRSKRFVSEARFVETLLVADASMAAFYGTDLQNHILTVMSMAARIYKHPSIRNSVNLVVVKVLIVEKERWGPEVSDNGGLTLRNFCSWQRRFNKPSDRHPEHYDTAILFTRQNFCGKGEQCDTLGMADVGTICDPDKSCSVIKDEGLQAAYTLAHELGHVLSMPHDDSKPCVRLFGPMGKYHMMAPFFIHVNKTLPWSPCSAVYLTELLDDGHGDCLLDAPTSVLPLPTGLPGHSTLYELDQQCKQIFGPDFRHCPNTSVEDICVQLCARHRDSDEPICHTKNGSLLWADGTPCGPGHLCLDGSCVLKEDVENPKAVVDGDWGPWRPWGQCSRTCGGGIQFSNRECDNPMPQNGGRFCLGERVKYQSCNTEECPPNGKSFREQQCEKYNAYNHTDLDGNFLQWVPKYSGVSPRDRCKLFCRARGRSEFKVFEAKVIDGTLCGPDTLSICVRGQCVKAGCDHVVNSPKKLDKCGVCGGKGTACRKISGSFTPFSYGYNDIVTIPAGATNIDVKQRSHPGVRNDGSYLALKTANGQYLLNGNLAISAIEQDILVKGTILKYSGSMATLERLQSFQALPEPLTVQLLTVSGEVFPPKVRYTFFVPNDMDFSVQNSKERATTNIIQSLPSAEWVLGDWSECPSTCRGSWQRRTVECRDPSGQASDTCDEALKPEDAKPCGSQPCPL.

A signal peptide spans 1-28 (MLRDPTTTGWPPLLLLLLQLPPPPLVCG). Positions 29 to 228 (APAGPGTGAQ…PFGSKTRSKR (200 aa)) are excised as a propeptide. Disordered stretches follow at residues 139 to 163 (PQGA…RRED) and 186 to 225 (NGQG…SKTR). Basic and acidic residues predominate over residues 191 to 215 (ERSDNEEDRKQDKEGLLKETEDSRK). In terms of domain architecture, Peptidase M12B spans 234 to 444 (RFVETLLVAD…GHGDCLLDAP (211 aa)). Intrachain disulfides connect Cys309-Cys362, Cys338-Cys344, Cys356-Cys439, Cys394-Cys423, Cys478-Cys502, Cys487-Cys523, Cys517-Cys528, Cys554-Cys591, Cys558-Cys596, and Cys569-Cys581. His378 is a Zn(2+) binding site. Residue Glu379 is part of the active site. His382 and His388 together coordinate Zn(2+). N-linked (GlcNAc...) asparagine glycosylation is found at Asn415, Asn480, and Asn506. The 89-residue stretch at 453–541 (GLPGHSTLYE…EDVENPKAVV (89 aa)) folds into the Disintegrin domain. The 56-residue stretch at 542 to 597 (DGDWGPWRPWGQCSRTCGGGIQFSNRECDNPMPQNGGRFCLGERVKYQSCNTEECP) folds into the TSP type-1 1 domain. Asn615 carries N-linked (GlcNAc...) asparagine glycosylation. Positions 706–847 (RKISGSFTPF…RATTNIIQSL (142 aa)) are spacer. The TSP type-1 2 domain occupies 848 to 904 (PSAEWVLGDWSECPSTCRGSWQRRTVECRDPSGQASDTCDEALKPEDAKPCGSQPCP). Positions 877–905 (DPSGQASDTCDEALKPEDAKPCGSQPCPL) are disordered.

Requires Zn(2+) as cofactor. The precursor is cleaved by a furin endopeptidase. In terms of processing, glycosylated. Can be O-fucosylated by POFUT2 on a serine or a threonine residue found within the consensus sequence C1-X(2)-(S/T)-C2-G of the TSP type-1 repeat domains where C1 and C2 are the first and second cysteine residue of the repeat, respectively. Fucosylated repeats can then be further glycosylated by the addition of a beta-1,3-glucose residue by the glucosyltransferase, B3GALTL. Fucosylation mediates the efficient secretion of ADAMTS family members. Can also be C-glycosylated with one or two mannose molecules on tryptophan residues within the consensus sequence W-X-X-W of the TPRs, and N-glycosylated. These other glycosylations can also facilitate secretion. Expressed specifically in adult lung and heart and low expression during mouse development.

The protein localises to the secreted. It is found in the extracellular space. Its subcellular location is the extracellular matrix. Has anti-angiogenic properties. This chain is A disintegrin and metalloproteinase with thrombospondin motifs 8 (Adamts8), found in Mus musculus (Mouse).